We begin with the raw amino-acid sequence, 117 residues long: uncharacterized protein (117 aa).

This is an uncharacterized protein from Mus musculus (Mouse).